Reading from the N-terminus, the 1213-residue chain is SWI/SNF complex subunit SMARCC2 (1213 aa).

The segment at 1-274 is marR-like, BRCT and chromo domains module; sequence MAVRKKDGGP…PVSRRKKISA (274 aa). A MarR-like domain is found at 10–136; it reads PNVKYYEAAD…IEKSLVQNNC (127 aa). Residues 140–183 enclose the BRCT; N-terminus domain; the sequence is PNIFLCPEIEPKLLGKLKDIVKRHQGTISEDKSNASHVVYPVPG. Positions 189-217 constitute a Chromo domain; it reads EWVRPVMKRDKQVLLHWGYYPDSYDTWIP. In terms of domain architecture, BRCT; C-terminus spans 233–257; that stretch reads KPRKVHAKWILDTDTFNEWMNEEDY. Residues 256–413 form a disordered region; the sequence is DYEVSDDKSP…GEQTKNPDLH (158 aa). A compositionally biased stretch (polar residues) spans 275-284; it reads KTLTDEVNSP. Ser283, Ser286, Ser302, Ser304, and Ser306 each carry phosphoserine. N6-(ADP-ribosyl)lysine is present on Lys312. N6-acetyllysine is present on Lys326. Residues 331–344 are compositionally biased toward basic and acidic residues; sequence HREEEQEDLTKDMD. 2 positions are modified to phosphoserine: Ser347 and Ser387. The segment covering 379-398 has biased composition (acidic residues); that stretch reads DLDEQDDESMETTGKDEDEN. In terms of domain architecture, SWIRM spans 424–521; it reads IIIPSYAAWF…YQVDAESRPT (98 aa). Glycyl lysine isopeptide (Lys-Gly) (interchain with G-Cter in SUMO2) cross-links involve residues Lys564, Lys566, Lys568, and Lys592. The region spanning 596 to 647 is the SANT domain; it reads SATREWTEQETLLLLEALEMYKDDWNKVSEHVGSRTQDECILHFLRLPIEDP. A Glycyl lysine isopeptide (Lys-Gly) (interchain with G-Cter in SUMO2) cross-link involves residue Lys704. The tract at residues 724-848 is disordered; it reads KVTGKADPAF…AEPEGERKTK (125 aa). Residues 747 to 777 are compositionally biased toward basic and acidic residues; the sequence is EPERIEESGTEEARPEGQAADEKKEPKEPRE. Residue Lys787 forms a Glycyl lysine isopeptide (Lys-Gly) (interchain with G-Cter in SUMO2) linkage. Over residues 788 to 848 the composition is skewed to basic and acidic residues; sequence EEISEVPKKD…AEPEGERKTK (61 aa). Ser813 bears the Phosphoserine mark. A Glycyl lysine isopeptide (Lys-Gly) (interchain with G-Cter in SUMO2) cross-link involves residue Lys848. Positions 907–934 form a coiled coil; that stretch reads EELETIMDREREALEYQRQQLLADRQAF. 2 disordered regions span residues 947–1073 and 1181–1213; these read RQQH…HPGV and LPSA…PPPQ. Low complexity predominate over residues 949–962; the sequence is QHFQQMHQQQQQQP. A compositionally biased stretch (pro residues) spans 963–974; it reads PTLPPGSQPIPP. The segment covering 975-1033 has biased composition (low complexity); it reads TGAAGPPTVHGLAVPPAAVASAPPGSGAPPGSLGPSEQIGQAGTTAGPQQPQQAGAPQP. 2 stretches are compositionally biased toward pro residues: residues 1034-1060 and 1185-1201; these read GAVP…PPSM and SPLP…PTAP.

Belongs to the SMARCC family. Component of the multiprotein chromatin-remodeling complexes SWI/SNF: SWI/SNF-A (BAF), SWI/SNF-B (PBAF) and related complexes. The canonical complex contains a catalytic subunit (either SMARCA4/BRG1/BAF190A or SMARCA2/BRM/BAF190B) and at least SMARCE1, ACTL6A/BAF53, SMARCC1/BAF155, SMARCC2/BAF170, and SMARCB1/SNF5/BAF47. Other subunits specific to each of the complexes may also be present permitting several possible combinations developmentally and tissue specific. Component of the BAF complex, which includes at least actin (ACTB), ARID1A/BAF250A, ARID1B/BAF250B, SMARCA2/BRM, SMARCA4/BRG1, ACTL6A/BAF53, ACTL6B/BAF53B, SMARCE1/BAF57, SMARCC1/BAF155, SMARCC2/BAF170, SMARCB1/SNF5/INI1, and one or more SMARCD1/BAF60A, SMARCD2/BAF60B, or SMARCD3/BAF60C. In muscle cells, the BAF complex also contains DPF3. Component of neural progenitors-specific chromatin remodeling complex (npBAF complex) composed of at least, ARID1A/BAF250A or ARID1B/BAF250B, SMARCD1/BAF60A, SMARCD3/BAF60C, SMARCA2/BRM/BAF190B, SMARCA4/BRG1/BAF190A, SMARCB1/BAF47, SMARCC1/BAF155, SMARCE1/BAF57, SMARCC2/BAF170, PHF10/BAF45A, ACTL6A/BAF53A and actin. Component of neuron-specific chromatin remodeling complex (nBAF complex) composed of at least, ARID1A/BAF250A or ARID1B/BAF250B, SMARCD1/BAF60A, SMARCD3/BAF60C, SMARCA2/BRM/BAF190B, SMARCA4/BRG1/BAF190A, SMARCB1/BAF47, SMARCC1/BAF155, SMARCE1/BAF57, SMARCC2/BAF170, DPF1/BAF45B, DPF3/BAF45C, ACTL6B/BAF53B and actin. Component of the SWI/SNF-B (PBAF) chromatin remodeling complex, at least composed of SMARCA4/BRG1, SMARCB1/BAF47/SNF5, ACTL6A/BAF53A or ACTL6B/BAF53B, SMARCE1/BAF57, SMARCD1/BAF60A, SMARCD2/BAF60B, perhaps SMARCD3/BAF60C, SMARCC1/BAF155, SMARCC2/BAF170, PBRM1/BAF180, ARID2/BAF200 and actin. May also interact with the SIN3A histone deacetylase transcription repressor complex in conjunction with SMARCA2 and SMARCA4. Interacts with SMARD1. Interacts with KDM6B. Interaction with RCOR1. Interacts with DPF2. Interacts with ERCC6. Interacts with FOS. Mono-ADP-ribosylation at Lys-312 by SIRT6 promotes recruitment to the enhancer region of the Heme oxygenase-1 (HO-1) locus, leading to transcription activation of the locus.

It localises to the nucleus. Its function is as follows. Involved in transcriptional activation and repression of select genes by chromatin remodeling (alteration of DNA-nucleosome topology). Component of SWI/SNF chromatin remodeling complexes that carry out key enzymatic activities, changing chromatin structure by altering DNA-histone contacts within a nucleosome in an ATP-dependent manner. Can stimulate the ATPase activity of the catalytic subunit of these complexes. May be required for CoREST dependent repression of neuronal specific gene promoters in non-neuronal cells. Belongs to the neural progenitors-specific chromatin remodeling complex (npBAF complex) and the neuron-specific chromatin remodeling complex (nBAF complex). During neural development a switch from a stem/progenitor to a postmitotic chromatin remodeling mechanism occurs as neurons exit the cell cycle and become committed to their adult state. The transition from proliferating neural stem/progenitor cells to postmitotic neurons requires a switch in subunit composition of the npBAF and nBAF complexes. As neural progenitors exit mitosis and differentiate into neurons, npBAF complexes which contain ACTL6A/BAF53A and PHF10/BAF45A, are exchanged for homologous alternative ACTL6B/BAF53B and DPF1/BAF45B or DPF3/BAF45C subunits in neuron-specific complexes (nBAF). The npBAF complex is essential for the self-renewal/proliferative capacity of the multipotent neural stem cells. The nBAF complex along with CREST plays a role regulating the activity of genes essential for dendrite growth. Critical regulator of myeloid differentiation, controlling granulocytopoiesis and the expression of genes involved in neutrophil granule formation. This Mus musculus (Mouse) protein is SWI/SNF complex subunit SMARCC2 (Smarcc2).